The following is a 180-amino-acid chain: CD-NTase/cGAS isopeptidase (180 aa).

The MPN domain maps to 33-165 (IVISSSTIEQ…AGSYSLSASV (133 aa)). E54 acts as the Proton donor/acceptor in catalysis. The Zn(2+) site is built by H115, H117, and D128.

It belongs to the peptidase M67B family. Cap3 isopeptidase subfamily.

Its function is as follows. Metalloprotease priming reversal component of a CBASS antivirus system. CBASS (cyclic oligonucleotide-based antiphage signaling system) provides immunity against bacteriophages. The CD-NTase protein (CdnD) synthesizes cyclic nucleotides in response to infection; these serve as specific second messenger signals. The signals activate a diverse range of effectors, leading to bacterial cell death and thus abortive phage infection. A type II-C(AAG) CBASS system. Reverses the primed state of DncV, the CD-NTase. Cleaves a CdnD-GFP (green fluorescent protein) fusion protein precisely at the C-terminus of CdnD. Overexpression decreases the efficacy of CBASS protection against phage T2. Antagonism of phage defense upon overexpression is CBASS-system specific, Cap3 from this bacteria only antagonizes its cognate CBASS system and not that of C.freundii, E.coli or V.cholerae. Functionally, protects E.coli against phage T2 infection. When the cdnD-cap2-cap3-cap4 operon is introduced in E.coli there is a more than 10(3) decrease in the efficiency of T2 plaque formation. The operon does not protect against phage T5 and only about 10-fold against T7. This chain is CD-NTase/cGAS isopeptidase, found in Enterobacter hormaechei subsp. hoffmannii (strain UCI 50).